The following is a 193-amino-acid chain: MHEYALLLLSTALVNNVVLVKFLGLCPAMGVSKSMDAALGMGLATTFVITLAAAASWMLEHWLLAPFDLGFLRILSFILVIAAAVQFTEMAIRKMSPALYQSLGIYLPLITTNCAVLGVALLNVQQGYGFFKSVLFGFGSALGFTLVLLIFAGLRERLALASVPAAFAGAPAAFITISLLSLAFMGLSGLVAT.

The next 6 helical transmembrane spans lie at 5-25 (ALLL…FLGL), 39-59 (LGMG…SWML), 62-82 (WLLA…LVIA), 102-122 (SLGI…VALL), 134-154 (VLFG…FAGL), and 172-192 (AAFI…GLVA).

It belongs to the NqrDE/RnfAE family. In terms of assembly, the complex is composed of six subunits: RnfA, RnfB, RnfC, RnfD, RnfE and RnfG.

The protein localises to the cell inner membrane. Its function is as follows. Part of a membrane-bound complex that couples electron transfer with translocation of ions across the membrane. This is Ion-translocating oxidoreductase complex subunit A from Aromatoleum aromaticum (strain DSM 19018 / LMG 30748 / EbN1) (Azoarcus sp. (strain EbN1)).